A 218-amino-acid chain; its full sequence is Adenylate kinase (218 aa).

10–15 (GAGKGT) serves as a coordination point for ATP. The NMP stretch occupies residues 30 to 59 (STGDIFREAIAKGTELGRKVQDIVNSGNLV). AMP-binding positions include Thr31, Arg36, 57 to 59 (NLV), 85 to 88 (GYPR), and Gln92. An LID region spans residues 126–163 (TRRVCSKCGKVYNVITLPSKVEGICDDCGGTLIQRDDD). ATP is bound at residue Arg127. Zn(2+) contacts are provided by Cys130 and Cys133. Residue 136-137 (VY) coordinates ATP. Zn(2+)-binding residues include Cys150 and Cys153. AMP-binding residues include Arg160 and Arg171. Lys199 contributes to the ATP binding site.

Belongs to the adenylate kinase family. Monomer.

It localises to the cytoplasm. It catalyses the reaction AMP + ATP = 2 ADP. It functions in the pathway purine metabolism; AMP biosynthesis via salvage pathway; AMP from ADP: step 1/1. Its function is as follows. Catalyzes the reversible transfer of the terminal phosphate group between ATP and AMP. Plays an important role in cellular energy homeostasis and in adenine nucleotide metabolism. This is Adenylate kinase from Fervidobacterium nodosum (strain ATCC 35602 / DSM 5306 / Rt17-B1).